A 570-amino-acid chain; its full sequence is Glutamate--tRNA ligase (570 aa).

The 'HIGH' region motif lies at 107–117 (PNPDFVLHLGS).

Belongs to the class-I aminoacyl-tRNA synthetase family. Glutamate--tRNA ligase type 2 subfamily.

The protein resides in the cytoplasm. It carries out the reaction tRNA(Glu) + L-glutamate + ATP = L-glutamyl-tRNA(Glu) + AMP + diphosphate. Catalyzes the attachment of glutamate to tRNA(Glu) in a two-step reaction: glutamate is first activated by ATP to form Glu-AMP and then transferred to the acceptor end of tRNA(Glu). This Pyrobaculum calidifontis (strain DSM 21063 / JCM 11548 / VA1) protein is Glutamate--tRNA ligase.